Here is a 172-residue protein sequence, read N- to C-terminus: Signal peptidase complex catalytic subunit SEC11 (172 aa).

At 1-14 the chain is on the cytoplasmic side; it reads MLSSLQNPRQAAAQ. The chain crosses the membrane as a helical; Signal-anchor for type II membrane protein span at residues 15–35; sequence LMNFAMILSTAFMMWKGLSVA. Over 36 to 172 the chain is Lumenal; sequence TDSPSPIVVV…MGLLVVIQRE (137 aa). Residues Ser-49, His-90, and Asp-115 each act as charge relay system in the active site. The tract at residues 158–169 is C-terminal short (CTS) helix; that stretch reads VMLGIMGLLVVI.

It belongs to the peptidase S26B family. Component of the signal peptidase complex (SPC) composed of a catalytic subunit SEC11 and three accessory subunits SPC1, SPC2 and SPC3. The complex induces a local thinning of the ER membrane which is used to measure the length of the signal peptide (SP) h-region of protein substrates. This ensures the selectivity of the complex towards h-regions shorter than 18-20 amino acids. SPC associates with the translocon complex.

The protein localises to the endoplasmic reticulum membrane. It carries out the reaction Cleavage of hydrophobic, N-terminal signal or leader sequences from secreted and periplasmic proteins.. Catalytic component of the signal peptidase complex (SPC) which catalyzes the cleavage of N-terminal signal sequences from nascent proteins as they are translocated into the lumen of the endoplasmic reticulum. Specifically cleaves N-terminal signal peptides that contain a hydrophobic alpha-helix (h-region) shorter than 18-20 amino acids. This is Signal peptidase complex catalytic subunit SEC11 (SEC11) from Metarhizium robertsii (strain ARSEF 23 / ATCC MYA-3075) (Metarhizium anisopliae (strain ARSEF 23)).